The chain runs to 407 residues: Probable acyl-CoA dehydrogenase FadE2 (407 aa).

It belongs to the acyl-CoA dehydrogenase family. FAD serves as cofactor.

The enzyme catalyses a 2,3-saturated acyl-CoA + A = a 2,3-dehydroacyl-CoA + AH2. The polypeptide is Probable acyl-CoA dehydrogenase FadE2 (Mycobacterium tuberculosis (strain ATCC 25618 / H37Rv)).